Consider the following 513-residue polypeptide: Probable G-protein coupled receptor Mth-like 9 (513 aa).

A signal peptide spans 1–19 (MVSPLIILLIIWLSVGAKS). The Extracellular segment spans residues 20 to 207 (VEIASINHPC…NCERFQTGYR (188 aa)). Disulfide bonds link Cys29–Cys82, Cys84–Cys89, Cys93–Cys181, and Cys94–Cys107. Asn36 carries N-linked (GlcNAc...) asparagine glycosylation. N-linked (GlcNAc...) asparagine glycans are attached at residues Asn106, Asn125, and Asn165. A helical membrane pass occupies residues 208-228 (VWIYAICSIIAIIINIFILSL). The Cytoplasmic portion of the chain corresponds to 229–242 (LGSVRDARKSHYGQ). Residues 243–263 (LIIYYLLSMIVGYSLLVYLAL) traverse the membrane as a helical segment. Residues 264–276 (KNPMKLSHVACRN) are Extracellular-facing. The helical transmembrane segment at 277–297 (IGFLAYFCIMLSFVFLAICSL) threads the bilayer. Topologically, residues 298–314 (DFLLKFKQKAVRSSVRR) are cytoplasmic. The chain crosses the membrane as a helical span at residues 315-335 (LSLALAVLAVIGLRFLVSLAQ). The Extracellular portion of the chain corresponds to 336 to 360 (DSKLPKHFKPGMGEDYCWFDVRTWG). The helical transmembrane segment at 361–381 (ILIYYYGPIALLLIFSIVCCL) threads the bilayer. Over 382–403 (KAYFSIYELPPDTQYILGTQLK) the chain is Cytoplasmic. A helical membrane pass occupies residues 404-424 (IVKTHFYAFSAYIVGVFAVWI). Topologically, residues 425–438 (REIVVYIMARVREH) are extracellular. The helical transmembrane segment at 439–459 (FFIIDFWSGICILGLAIAGFI) threads the bilayer. The Cytoplasmic portion of the chain corresponds to 460–513 (LLLGKNLHVKSWWAINVESSQTDLSIINARVYKFDEKGDLKSSDSPYKPTVTSL).

It belongs to the G-protein coupled receptor 2 family. Mth subfamily.

It is found in the cell membrane. The sequence is that of Probable G-protein coupled receptor Mth-like 9 (mthl9) from Drosophila melanogaster (Fruit fly).